Here is a 491-residue protein sequence, read N- to C-terminus: Blue-light-activated histidine kinase (491 aa).

The region spanning 19–92 is the PAS 1 domain; sequence EANPFTAAVE…EIIHSALEAE (74 aa). S-4a-FMN cysteine is present on Cys-69. The PAC domain occupies 93-147; the sequence is QSVEIDILNYKKSGEPFWNRLHISPVKTENGELHHFVSSQLDVTLELGKLVELEK. The PAS 2 domain occupies 159 to 230; the sequence is SSDQLQYIVE…QRSQESFATG (72 aa). The HWE histidine kinase domain stretch occupies residues 286 to 368; that stretch reads EISHRFKNSM…GHRIRTSGPE (83 aa). His-289 carries the phosphohistidine; by autocatalysis modification.

Post-translationally, FMN binds covalently to cysteine after exposure to blue light and this bond is spontaneously broken in the dark.

The enzyme catalyses ATP + protein L-histidine = ADP + protein N-phospho-L-histidine.. Functionally, photosensitive kinase that is involved in increased bacterial virulence upon exposure to light. The sequence is that of Blue-light-activated histidine kinase from Brucella anthropi (strain ATCC 49188 / DSM 6882 / CCUG 24695 / JCM 21032 / LMG 3331 / NBRC 15819 / NCTC 12168 / Alc 37) (Ochrobactrum anthropi).